We begin with the raw amino-acid sequence, 542 residues long: Isocitrate lyase (542 aa).

102–104 (SGW) is a binding site for substrate. A Mg(2+)-binding site is contributed by Asp170. The active-site Proton acceptor is the Cys208. Substrate is bound by residues 209–210 (GH), Arg245, 428–432 (NLSPS), and Thr462.

The protein belongs to the isocitrate lyase/PEP mutase superfamily. Isocitrate lyase family. Homotetramer. Requires Mg(2+) as cofactor.

It is found in the glyoxysome. It carries out the reaction D-threo-isocitrate = glyoxylate + succinate. It catalyses the reaction (2S,3R)-3-hydroxybutane-1,2,3-tricarboxylate = pyruvate + succinate. Its pathway is carbohydrate metabolism; glyoxylate cycle; (S)-malate from isocitrate: step 1/2. In terms of biological role, catalyzes the formation of succinate and glyoxylate from isocitrate, a key step of the glyoxylate cycle, which operates as an anaplerotic route for replenishing the tricarboxylic acid cycle. Required for growth on ethanol or acetate, but dispensable when fermentable carbon sources are available. Also acts on 2-methylisocitrate. The chain is Isocitrate lyase from Kluyveromyces lactis (strain ATCC 8585 / CBS 2359 / DSM 70799 / NBRC 1267 / NRRL Y-1140 / WM37) (Yeast).